The chain runs to 296 residues: Ribosomal RNA small subunit methyltransferase A (296 aa).

S-adenosyl-L-methionine contacts are provided by Asn31, Leu33, Gly58, Glu79, Asp111, and Asn136.

The protein belongs to the class I-like SAM-binding methyltransferase superfamily. rRNA adenine N(6)-methyltransferase family. RsmA subfamily.

It is found in the cytoplasm. The enzyme catalyses adenosine(1518)/adenosine(1519) in 16S rRNA + 4 S-adenosyl-L-methionine = N(6)-dimethyladenosine(1518)/N(6)-dimethyladenosine(1519) in 16S rRNA + 4 S-adenosyl-L-homocysteine + 4 H(+). Functionally, specifically dimethylates two adjacent adenosines (A1518 and A1519) in the loop of a conserved hairpin near the 3'-end of 16S rRNA in the 30S particle. May play a critical role in biogenesis of 30S subunits. In Lactobacillus delbrueckii subsp. bulgaricus (strain ATCC BAA-365 / Lb-18), this protein is Ribosomal RNA small subunit methyltransferase A.